Here is a 421-residue protein sequence, read N- to C-terminus: Adenylosuccinate synthetase (421 aa).

GTP contacts are provided by residues 11–17 (GDEGKGK) and 39–41 (GHT). Asp12 acts as the Proton acceptor in catalysis. Mg(2+) is bound by residues Asp12 and Gly39. IMP-binding positions include 12–15 (DEGK), 37–40 (NAGH), Thr124, Arg138, Gln220, Thr235, and Arg299. The active-site Proton donor is His40. 295–301 (TTTGRPR) lines the substrate pocket. Residues Arg301, 327-329 (KLD), and 409-411 (SVG) each bind GTP.

Belongs to the adenylosuccinate synthetase family. In terms of assembly, homodimer. It depends on Mg(2+) as a cofactor.

It localises to the cytoplasm. The catalysed reaction is IMP + L-aspartate + GTP = N(6)-(1,2-dicarboxyethyl)-AMP + GDP + phosphate + 2 H(+). It functions in the pathway purine metabolism; AMP biosynthesis via de novo pathway; AMP from IMP: step 1/2. Plays an important role in the de novo pathway of purine nucleotide biosynthesis. Catalyzes the first committed step in the biosynthesis of AMP from IMP. This is Adenylosuccinate synthetase from Methanothrix thermoacetophila (strain DSM 6194 / JCM 14653 / NBRC 101360 / PT) (Methanosaeta thermophila).